A 617-amino-acid polypeptide reads, in one-letter code: NADPH-dependent diflavin oxidoreductase 1 (617 aa).

One can recognise a Flavodoxin-like domain in the interval 3–147 (PMILYASETG…AFLPWLQQTL (145 aa)). FMN-binding positions include 9–14 (SETGNA), 56–59 (STHG), 94–103 (LGDSSYERFC), and Glu-129. Residues 226 to 465 (DDWVWATLKK…HIASPTLFLP (240 aa)) enclose the FAD-binding FR-type domain. FAD-binding positions include 404–407 (RQFS) and 438–441 (GLCS). Residues Thr-479, 534-535 (SR), and 540-544 (RIYVQ) contribute to the NADP(+) site. Trp-617 serves as a coordination point for FAD.

It belongs to the NADPH-dependent diflavin oxidoreductase NDOR1 family. This sequence in the N-terminal section; belongs to the flavodoxin family. In the C-terminal section; belongs to the flavoprotein pyridine nucleotide cytochrome reductase family. As to quaternary structure, interacts with DRE2; as part of the cytosolic iron-sulfur (Fe-S) protein assembly (CIA) machinery. Requires FAD as cofactor. It depends on FMN as a cofactor.

It localises to the cytoplasm. It is found in the mitochondrion. The enzyme catalyses 2 oxidized [2Fe-2S]-[protein] + NADPH = 2 reduced [2Fe-2S]-[protein] + NADP(+) + H(+). Its function is as follows. NADPH-dependent reductase which is a central component of the cytosolic iron-sulfur (Fe-S) protein assembly (CIA) machinery. Transfers electrons from NADPH via its FAD and FMN prosthetic groups to the [2Fe-2S] cluster of DRE2, another key component of the CIA machinery. In turn, this reduced cluster provides electrons for assembly of cytosolic iron-sulfur cluster proteins. Positively controls H(2)O(2)-induced cell death. The sequence is that of NADPH-dependent diflavin oxidoreductase 1 from Cryptococcus neoformans var. neoformans serotype D (strain B-3501A) (Filobasidiella neoformans).